We begin with the raw amino-acid sequence, 425 residues long: Serine--tRNA ligase (425 aa).

229-231 (TSE) contributes to the L-serine binding site. Residues 259–261 (RKE) and valine 275 contribute to the ATP site. Residue glutamate 282 coordinates L-serine. 349–352 (EVTS) contacts ATP. Threonine 384 contacts L-serine.

It belongs to the class-II aminoacyl-tRNA synthetase family. Type-1 seryl-tRNA synthetase subfamily. Homodimer. The tRNA molecule binds across the dimer.

It is found in the cytoplasm. The enzyme catalyses tRNA(Ser) + L-serine + ATP = L-seryl-tRNA(Ser) + AMP + diphosphate + H(+). The catalysed reaction is tRNA(Sec) + L-serine + ATP = L-seryl-tRNA(Sec) + AMP + diphosphate + H(+). It participates in aminoacyl-tRNA biosynthesis; selenocysteinyl-tRNA(Sec) biosynthesis; L-seryl-tRNA(Sec) from L-serine and tRNA(Sec): step 1/1. Functionally, catalyzes the attachment of serine to tRNA(Ser). Is also able to aminoacylate tRNA(Sec) with serine, to form the misacylated tRNA L-seryl-tRNA(Sec), which will be further converted into selenocysteinyl-tRNA(Sec). This Borrelia garinii subsp. bavariensis (strain ATCC BAA-2496 / DSM 23469 / PBi) (Borreliella bavariensis) protein is Serine--tRNA ligase.